Consider the following 249-residue polypeptide: Exosome complex component Rrp41 (249 aa).

It belongs to the RNase PH family. Rrp41 subfamily. Component of the archaeal exosome complex. Forms a hexameric ring-like arrangement composed of 3 Rrp41-Rrp42 heterodimers. The hexameric ring associates with a trimer of Rrp4 and/or Csl4 subunits.

It is found in the cytoplasm. In terms of biological role, catalytic component of the exosome, which is a complex involved in RNA degradation. Has 3'-&gt;5' exoribonuclease activity. Can also synthesize heteromeric RNA-tails. This is Exosome complex component Rrp41 from Thermococcus gammatolerans (strain DSM 15229 / JCM 11827 / EJ3).